Here is a 331-residue protein sequence, read N- to C-terminus: Glycerophosphodiester phosphodiesterase 1 (331 aa).

Residues 1–2 (MW) are Cytoplasmic-facing. A helical membrane pass occupies residues 3-23 (LWEEQGGLMGPFSFLLLVLLL). The Lumenal segment spans residues 24–254 (LTRSPFNACL…WKQSMFVALD (231 aa)). The region spanning 65-331 (VSAIAHRGGS…SMLEDCTPEF (267 aa)) is the GP-PDE domain. Positions 97 and 99 each coordinate Mg(2+). Asn168 carries N-linked (GlcNAc...) asparagine glycosylation. Asp174 contacts Mg(2+). Residue Asn198 is glycosylated (N-linked (GlcNAc...) asparagine). Residues 255 to 275 (ILLDWSMHNILWYLCGVSAFL) form a helical membrane-spanning segment. The Cytoplasmic segment spans residues 276–331 (AQKDFISPDYVKKWSAKGIQVVAWTVNTFDEKSYYESHLGSSYITDSMLEDCTPEF).

Belongs to the glycerophosphoryl diester phosphodiesterase family. As to quaternary structure, interacts with PRAF2. Interacts with RGS16. Requires Mg(2+) as cofactor. N-glycosylated.

It is found in the cell membrane. The protein resides in the cytoplasmic vesicle membrane. It carries out the reaction sn-glycero-3-phospho-1D-myo-inositol + H2O = myo-inositol + sn-glycerol 3-phosphate + H(+). The catalysed reaction is 1-O-(1Z-octadecenyl)-sn-glycero-3-phospho-(N-5Z,8Z,11Z,14Z-eicosatetraenoyl)-ethanolamine + H2O = 1-O-(1Z-octadecenyl)-sn-glycero-3-phosphate + N-(5Z,8Z,11Z,14Z-eicosatetraenoyl)-ethanolamine + H(+). It catalyses the reaction 1-O-(1Z-octadecenyl)-sn-glycero-3-phospho-(N-9Z-octadecenoyl)-ethanolamine + H2O = 1-O-(1Z-octadecenyl)-sn-glycero-3-phosphate + N-(9Z-octadecenoyl) ethanolamine + H(+). The enzyme catalyses 1-O-(1Z-octadecenyl)-sn-glycero-3-phospho-N-hexadecanoyl-ethanolamine + H2O = 1-O-(1Z-octadecenyl)-sn-glycero-3-phosphate + N-hexadecanoylethanolamine + H(+). It carries out the reaction N-(4Z,7Z,10Z,13Z,16Z,19Z)-docosahexaenoyl-sn-glycero-3-phosphoethanolamine + H2O = N-(4Z,7Z,10Z,13Z,16Z,19Z)-docosahexaenoyl ethanolamine + sn-glycerol 3-phosphate + H(+). The catalysed reaction is N-eicosanoyl-sn-glycero-3-phosphoethanolamine + H2O = N-eicosanoyl ethanolamine + sn-glycerol 3-phosphate + H(+). It catalyses the reaction N-hexadecanoyl-sn-glycero-3-phosphoethanolamine + H2O = N-hexadecanoylethanolamine + sn-glycerol 3-phosphate + H(+). The enzyme catalyses N-(9Z-octadecenoyl)-sn-glycero-3-phosphoethanolamine + H2O = N-(9Z-octadecenoyl) ethanolamine + sn-glycerol 3-phosphate + H(+). It carries out the reaction N-(5Z,8Z,11Z,14Z-eicosatetraenoyl)-sn-glycero-3-phosphoethanolamine + H2O = N-(5Z,8Z,11Z,14Z-eicosatetraenoyl)-ethanolamine + sn-glycerol 3-phosphate + H(+). Inhibited by EDTA, calcium chloride, and zinc chloride. Enhanced by magnesium chloride. Glycerophosphodiester phosphodiesterase activity can be modulated by G-protein signaling pathways. Its function is as follows. Hydrolyzes the phosphodiester bond of glycerophosphodiesters such as glycerophosphoinositol (GroPIns) and glycerophosphoethanolamine (GroPEth), to yield a glycerol phosphate and an alcohol. Hydrolyzes glycerophospho-N-acylethanolamines to N-acylethanolamines in the brain and participates in bioactive N-acylethanolamine biosynthesis such as anandamide (an endocannabinoid), N-palmitoylethanolamine (an anti-inflammatory), and N-oleoylethanolamine (an anorexic). In addition, has a lysophospholipase D activity by hydrolyzing N-acyl-lysoplasmenylethanolamine (N-acyl-lysoPlsEt) to N-acylethanolamine. However lysophospholipase D activity is lower than glycerophosphodiester phosphodiesterase activity. Has little or no activity towards glycerophosphocholine. This is Glycerophosphodiester phosphodiesterase 1 from Bos taurus (Bovine).